A 456-amino-acid polypeptide reads, in one-letter code: Equilibrative nucleoside transporter 1 (456 aa).

Residues 2-12 (TTSHQPQDRYK) are Cytoplasmic-facing. The helical transmembrane segment at 13-29 (AVWLIFFMLGLGTLLPW) threads the bilayer. Over 30–82 (NFFMTATQYFTNRLDMSQNVSLVTAELSKDAQASAAPAAPLPERNSLSAIFNN) the chain is Extracellular. The N-linked (GlcNAc...) asparagine glycan is linked to Asn-48. The chain crosses the membrane as a helical span at residues 83–107 (VMTLCAMLPLLLFTYLNSFLHQRIP). The Cytoplasmic segment spans residues 108 to 111 (QSVR). A helical membrane pass occupies residues 112–130 (ILGSLVAILLVFLITAILV). The Extracellular portion of the chain corresponds to 131-138 (KVQLDALP). Residues 139–157 (FFVITMIKIVLINSFGAIL) form a helical membrane-spanning segment. At 158–174 (QGSLFGLAGLLPASYTA) the chain is on the cytoplasmic side. Residues 175–199 (PIMSGQGLAGFFASVAMICAIASGS) traverse the membrane as a helical segment. Residues 200-206 (ELSESAF) are Extracellular-facing. The chain crosses the membrane as a helical span at residues 207 to 227 (GYFITACAVIILTIICYLGLP). The Cytoplasmic portion of the chain corresponds to 228 to 291 (RLEFYRYYQQ…IKAILKNISV (64 aa)). A phosphoserine mark is found at Ser-254, Ser-269, and Ser-273. Over residues 254–266 (SKGEEPRAGKEES) the composition is skewed to basic and acidic residues. The disordered stretch occupies residues 254–276 (SKGEEPRAGKEESGVSVSNSQPT). Residues 292 to 311 (LAFSVCFIFTITIGMFPAVT) form a helical membrane-spanning segment. The Extracellular portion of the chain corresponds to 312-323 (VEVKSSIAGSST). A helical membrane pass occupies residues 324 to 342 (WERYFIPVSCFLTFNIFDW). Over 343 to 359 (LGRSLTAVFMWPGKDSR) the chain is Cytoplasmic. The chain crosses the membrane as a helical span at residues 360 to 378 (WLPSLVLARLVFVPLLLLC). Residues 379–393 (NIKPRRYLTVVFEHD) are Extracellular-facing. The chain crosses the membrane as a helical span at residues 394-413 (AWFIFFMAAFAFSNGYLASL). At 414 to 431 (CMCFGPKKVKPAEAETAG) the chain is on the cytoplasmic side. A helical membrane pass occupies residues 432–452 (AIMAFFLCLGLALGAVFSFLF). The Extracellular portion of the chain corresponds to 453–456 (RAIV).

It belongs to the SLC29A/ENT transporter (TC 2.A.57) family. Identified in a complex with STOM. Glycosylated. As to expression, expressed in testis at the blood-testis barrier (at protein level). Detected in erythrocytes (at protein level). Expressed at relatively high levels in cerebral cortex, particularly the frontal and parietal lobes, and the thalamus and basal ganglia (at protein level). In the midbrain expressed at moderate levels, whereas in the other areas of the brainstem, namely medulla and pons, cerebellum and the hippocampus expressed at lower amounts when compared to the other brain regions (at protein level). Expressed in Langerhans cells and lymphocytes in the pancreas (at protein level). Expressed in kidney, in polarized renal epithelial cells. Expressed in adipose tissues. Expressed in placenta. Expressed in small intestine.

It localises to the basolateral cell membrane. It is found in the apical cell membrane. The protein localises to the cell membrane. It catalyses the reaction adenosine(in) = adenosine(out). The enzyme catalyses guanosine(in) = guanosine(out). It carries out the reaction inosine(in) = inosine(out). The catalysed reaction is uridine(out) = uridine(in). It catalyses the reaction thymidine(in) = thymidine(out). The enzyme catalyses cytidine(in) = cytidine(out). It carries out the reaction adenine(out) = adenine(in). The catalysed reaction is guanine(out) = guanine(in). It catalyses the reaction thymine(out) = thymine(in). The enzyme catalyses uracil(in) = uracil(out). It carries out the reaction hypoxanthine(out) = hypoxanthine(in). With respect to regulation, transporter activity is sensitive to low concentrations of the inhibitor nitrobenzylmercaptopurine riboside (NBMPR). Inhibited by dilazep. Inhibited by dipyridamole. Inhibited by hypoxanthine. Inhibited by azidothymidine (AZT). Inhibited by dideoxycytidine (ddC). Inhibited by dideoxyinosine (ddI). Inhibited by draflazine. Inhibited by soluflazine. Inhibited by cladribine. Inhibited by capecitabine. Inhibited by clofarabine. Inhibited by ribavirin. Modestly inhibited by acyclovir. Modestly inhibited by 5-fluorouracil. Uniporter involved in the facilitative transport of nucleosides and nucleobases, and contributes to maintaining their cellular homeostasis. Functions as a Na(+)-independent transporter. Involved in the transport of nucleosides such as adenosine, guanosine, inosine, uridine, thymidine and cytidine. Also transports purine nucleobases (hypoxanthine, adenine, guanine) and pyrimidine nucleobases (thymine, uracil). Mediates basolateral nucleoside uptake into Sertoli cells, thereby regulating the transport of nucleosides in testis across the blood-testis barrier. Regulates inosine levels in brown adipocytes tissues (BAT) and extracellular inosine levels, which controls BAT-dependent energy expenditure. In Homo sapiens (Human), this protein is Equilibrative nucleoside transporter 1.